Here is a 509-residue protein sequence, read N- to C-terminus: Putative thymidine phosphorylase (509 aa).

The protein belongs to the thymidine/pyrimidine-nucleoside phosphorylase family. Type 2 subfamily.

It carries out the reaction thymidine + phosphate = 2-deoxy-alpha-D-ribose 1-phosphate + thymine. The polypeptide is Putative thymidine phosphorylase (Chelativorans sp. (strain BNC1)).